The following is a 762-amino-acid chain: Alpha-xylosidase XylQ (762 aa).

Residue aspartate 414 is the Nucleophile of the active site. Residue glutamate 417 is part of the active site.

This sequence belongs to the glycosyl hydrolase 31 family.

The protein resides in the cell membrane. The enzyme catalyses Hydrolysis of terminal, non-reducing alpha-D-xylose residues with release of alpha-D-xylose.. Involved in the metabolism of isoprimeverose. Hydrolyzes isoprimeverose into equimolar amounts of glucose and xylose. In vitro, can also use p-nitrophenyl-alpha-D-xylopyranoside (alpha-p-NPX). The chain is Alpha-xylosidase XylQ from Lactiplantibacillus pentosus (Lactobacillus pentosus).